A 329-amino-acid chain; its full sequence is R-linalool synthase (329 aa).

D79 is a Mg(2+) binding site. The short motif at 79–83 (DDQFD) is the DDXXD motif element. Position 172 (R172) interacts with substrate. Mg(2+) contacts are provided by N218 and S222. The short motif at 218-226 (NELHSFEKD) is the NXXXSXXXD motif element. K225 is a binding site for substrate. Residue D226 participates in Mg(2+) binding. Substrate is bound at residue 308–309 (RY).

It belongs to the terpene synthase family. As to quaternary structure, homodimer. The cofactor is Mg(2+).

The enzyme catalyses (2E)-geranyl diphosphate + H2O = (R)-linalool + diphosphate. It carries out the reaction (2E,6E)-farnesyl diphosphate + H2O = (6E)-nerolidol + diphosphate. In vitro, catalyzes the formation of R-linalool from geranyl diphosphate (GPP). Can also accept farnesyl diphosphate (FPP) as substrate to produce trans-nerolidol. The polypeptide is R-linalool synthase (Streptomyces clavuligerus).